The primary structure comprises 404 residues: uncharacterized protein (404 aa).

11 helical membrane passes run 15–35 (WSLL…PGFL), 43–63 (NTLA…DIFA), 84–104 (MVLP…GLAF), 121–141 (GITP…IFVI), 154–174 (IAGF…APPV), 187–207 (ISIF…ITFA), 231–251 (VVGI…VLGV), 279–299 (IFGL…AYTS), 316–336 (GIII…GQPA), 338–358 (ILVL…GTLL), and 373–393 (PLWL…MGIY).

Belongs to the NRAMP family.

It is found in the cell membrane. This is an uncharacterized protein from Bacillus subtilis (strain 168).